An 824-amino-acid chain; its full sequence is Spindle-defective protein 2 (824 aa).

2 stretches are compositionally biased toward acidic residues: residues 16–27 (EIEDSPIDDNDN) and 35–44 (GDVELEEEEV). Positions 16–98 (EIEDSPIDDN…SRPASVMSDK (83 aa)) are disordered. Positions 59 to 70 (TNMTNPKVNDLT) are enriched in polar residues. The segment covering 81-98 (SAASSRSASRPASVMSDK) has biased composition (low complexity). Residues 111-131 (ENAIEEYTNQVFADENKADLL) adopt a coiled-coil conformation. The disordered stretch occupies residues 189–252 (RAKPGANDNE…GQYQGPNFDL (64 aa)). The segment covering 207-225 (NVPTTSDKSAFITSPMNST) has biased composition (polar residues). Residues 304-324 (NNKNQDLFAALEEARKRRAAQ) adopt a coiled-coil conformation. 2 disordered regions span residues 342–372 (KPTS…LTTS) and 433–455 (NNGN…VRTM). Over residues 349 to 366 (SGNVVSSTSNDNTTAASS) the composition is skewed to low complexity.

Interacts with sas-7 (via C-terminus); may be recruited to centrioles by sas-7.

It is found in the cytoplasm. Its subcellular location is the cytoskeleton. The protein resides in the microtubule organizing center. It localises to the centrosome. The protein localises to the centriole. Functionally, required both for centrosome duplication and maturation. Required for pericentriolar material (PCM) recruitment. This chain is Spindle-defective protein 2, found in Caenorhabditis elegans.